A 494-amino-acid polypeptide reads, in one-letter code: Peptidyl-prolyl cis-trans isomerase-like 4 (494 aa).

The PPIase cyclophilin-type domain occupies 1 to 172 (MSVLLETSAG…VDIRIKHTVI (172 aa)). The interval 176 to 196 (PYPDPAGMREPSASPPPSKAQ) is disordered. Residues 206-240 (EELLDVEASEEAAAEAERRRREREAAAQALTLEMM) are a coiled coil. The region spanning 253 to 331 (NVLFVCKLNP…RRIHVDFSQS (79 aa)) is the RRM domain. Composition is skewed to basic and acidic residues over residues 391-418 (DLKG…DRST) and 425-494 (PRRD…YRRR). The segment at 391–494 (DLKGRHDGDK…NRGRDDYRRR (104 aa)) is disordered.

The protein belongs to the cyclophilin-type PPIase family. PPIL4 subfamily.

It localises to the nucleus. The catalysed reaction is [protein]-peptidylproline (omega=180) = [protein]-peptidylproline (omega=0). Its function is as follows. PPIases accelerate the folding of proteins. It catalyzes the cis-trans isomerization of proline imidic peptide bonds in oligopeptides. In Neurospora crassa (strain ATCC 24698 / 74-OR23-1A / CBS 708.71 / DSM 1257 / FGSC 987), this protein is Peptidyl-prolyl cis-trans isomerase-like 4 (cyp-6).